A 425-amino-acid chain; its full sequence is Trigger factor (425 aa).

A PPIase FKBP-type domain is found at 163-248 (GDTAVIDFEG…VHEIKTKELP (86 aa)).

This sequence belongs to the FKBP-type PPIase family. Tig subfamily.

The protein localises to the cytoplasm. The enzyme catalyses [protein]-peptidylproline (omega=180) = [protein]-peptidylproline (omega=0). In terms of biological role, involved in protein export. Acts as a chaperone by maintaining the newly synthesized protein in an open conformation. Functions as a peptidyl-prolyl cis-trans isomerase. This chain is Trigger factor, found in Bacillus cereus (strain ATCC 10987 / NRS 248).